We begin with the raw amino-acid sequence, 152 residues long: Transcriptional regulator MraZ (152 aa).

SpoVT-AbrB domains follow at residues 5 to 52 and 81 to 124; these read ATLV…PLPE and ASEC…DETT.

This sequence belongs to the MraZ family. As to quaternary structure, forms oligomers.

It localises to the cytoplasm. Its subcellular location is the nucleoid. Its function is as follows. Negatively regulates its own expression and that of the subsequent genes in the proximal part of the division and cell wall (dcw) gene cluster. Acts by binding directly to DNA. May also regulate the expression of genes outside the dcw cluster. This is Transcriptional regulator MraZ from Klebsiella pneumoniae subsp. pneumoniae (strain ATCC 700721 / MGH 78578).